The following is a 441-amino-acid chain: ATP-dependent protease ATPase subunit HslU (441 aa).

ATP is bound by residues Ile18, 60 to 65 (GVGKTE), Asp254, Glu319, and Arg391.

It belongs to the ClpX chaperone family. HslU subfamily. As to quaternary structure, a double ring-shaped homohexamer of HslV is capped on each side by a ring-shaped HslU homohexamer. The assembly of the HslU/HslV complex is dependent on binding of ATP.

It localises to the cytoplasm. Functionally, ATPase subunit of a proteasome-like degradation complex; this subunit has chaperone activity. The binding of ATP and its subsequent hydrolysis by HslU are essential for unfolding of protein substrates subsequently hydrolyzed by HslV. HslU recognizes the N-terminal part of its protein substrates and unfolds these before they are guided to HslV for hydrolysis. The polypeptide is ATP-dependent protease ATPase subunit HslU (Shewanella sediminis (strain HAW-EB3)).